The sequence spans 376 residues: Beta sliding clamp (376 aa).

It belongs to the beta sliding clamp family. In terms of assembly, forms a ring-shaped head-to-tail homodimer around DNA which binds and tethers DNA polymerases and other proteins to the DNA. The DNA replisome complex has a single clamp-loading complex (3 tau and 1 each of delta, delta', psi and chi subunits) which binds 3 Pol III cores (1 core on the leading strand and 2 on the lagging strand) each with a beta sliding clamp dimer. Additional proteins in the replisome are other copies of gamma, psi and chi, Ssb, DNA helicase and RNA primase.

It localises to the cytoplasm. Functionally, confers DNA tethering and processivity to DNA polymerases and other proteins. Acts as a clamp, forming a ring around DNA (a reaction catalyzed by the clamp-loading complex) which diffuses in an ATP-independent manner freely and bidirectionally along dsDNA. Initially characterized for its ability to contact the catalytic subunit of DNA polymerase III (Pol III), a complex, multichain enzyme responsible for most of the replicative synthesis in bacteria; Pol III exhibits 3'-5' exonuclease proofreading activity. The beta chain is required for initiation of replication as well as for processivity of DNA replication. This Streptomyces coelicolor (strain ATCC BAA-471 / A3(2) / M145) protein is Beta sliding clamp (dnaN).